The following is a 293-amino-acid chain: Pyridoxal 5'-phosphate synthase subunit PdxS (293 aa).

Residue Asp-23 coordinates D-ribose 5-phosphate. Catalysis depends on Lys-80, which acts as the Schiff-base intermediate with D-ribose 5-phosphate. Gly-152 contributes to the D-ribose 5-phosphate binding site. Arg-164 contacts D-glyceraldehyde 3-phosphate. D-ribose 5-phosphate contacts are provided by residues Gly-213 and 234–235 (GS).

Belongs to the PdxS/SNZ family. As to quaternary structure, in the presence of PdxT, forms a dodecamer of heterodimers.

It catalyses the reaction aldehydo-D-ribose 5-phosphate + D-glyceraldehyde 3-phosphate + L-glutamine = pyridoxal 5'-phosphate + L-glutamate + phosphate + 3 H2O + H(+). It participates in cofactor biosynthesis; pyridoxal 5'-phosphate biosynthesis. In terms of biological role, catalyzes the formation of pyridoxal 5'-phosphate from ribose 5-phosphate (RBP), glyceraldehyde 3-phosphate (G3P) and ammonia. The ammonia is provided by the PdxT subunit. Can also use ribulose 5-phosphate and dihydroxyacetone phosphate as substrates, resulting from enzyme-catalyzed isomerization of RBP and G3P, respectively. The sequence is that of Pyridoxal 5'-phosphate synthase subunit PdxS from Niallia circulans (Bacillus circulans).